Consider the following 210-residue polypeptide: Imidazole glycerol phosphate synthase subunit HisH (210 aa).

Residues 3-210 (TIAIIDYGMG…ILKNFALSKA (208 aa)) enclose the Glutamine amidotransferase type-1 domain. The Nucleophile role is filled by C81. Catalysis depends on residues H190 and E192.

As to quaternary structure, heterodimer of HisH and HisF.

It localises to the cytoplasm. The enzyme catalyses 5-[(5-phospho-1-deoxy-D-ribulos-1-ylimino)methylamino]-1-(5-phospho-beta-D-ribosyl)imidazole-4-carboxamide + L-glutamine = D-erythro-1-(imidazol-4-yl)glycerol 3-phosphate + 5-amino-1-(5-phospho-beta-D-ribosyl)imidazole-4-carboxamide + L-glutamate + H(+). It carries out the reaction L-glutamine + H2O = L-glutamate + NH4(+). The protein operates within amino-acid biosynthesis; L-histidine biosynthesis; L-histidine from 5-phospho-alpha-D-ribose 1-diphosphate: step 5/9. Its function is as follows. IGPS catalyzes the conversion of PRFAR and glutamine to IGP, AICAR and glutamate. The HisH subunit catalyzes the hydrolysis of glutamine to glutamate and ammonia as part of the synthesis of IGP and AICAR. The resulting ammonia molecule is channeled to the active site of HisF. This is Imidazole glycerol phosphate synthase subunit HisH from Geobacter metallireducens (strain ATCC 53774 / DSM 7210 / GS-15).